A 202-amino-acid polypeptide reads, in one-letter code: Josephin-1 (202 aa).

Positions 1 to 22 (MSCVPWKGDKAKAESSDLPQAA) are disordered. Residue serine 15 is modified to Phosphoserine. The region spanning 23-202 (PPQIYHEKQR…EAHQSWRADV (180 aa)) is the Josephin domain. The active-site Nucleophile is cysteine 36. The active-site Proton acceptor is the histidine 139.

In terms of assembly, interacts with beta-actin/ACTB. Post-translationally, monoubiquitinated. Ubiquitination activates deubiquitination activity in vitro. As to expression, widely expressed (at protein level).

It localises to the cell membrane. It is found in the cytoplasm. The enzyme catalyses Thiol-dependent hydrolysis of ester, thioester, amide, peptide and isopeptide bonds formed by the C-terminal Gly of ubiquitin (a 76-residue protein attached to proteins as an intracellular targeting signal).. Deubiquitinates monoubiquitinated probes (in vitro). When ubiquitinated, cleaves 'Lys-63'-linked and 'Lys-48'-linked poly-ubiquitin chains (in vitro), hence may act as a deubiquitinating enzyme. May increase macropinocytosis and suppress clathrin- and caveolae-mediated endocytosis. May enhance membrane dynamics and cell motility independently of its catalytic activity. This Mus musculus (Mouse) protein is Josephin-1 (Josd1).